Here is a 719-residue protein sequence, read N- to C-terminus: Protein Hook homolog 2 (719 aa).

The segment at 1–161 is required for localization to the centrosome and induction of aggresome formation; sequence MSVDKAELCG…ELMTKDTPDS (161 aa). Residues 1–548 form a sufficient for interaction with microtubules region; sequence MSVDKAELCG…LKRKLEEHLQ (548 aa). The Calponin-homology (CH) domain occupies 6-122; that stretch reads AELCGSLLTW…KLLQLVLGCA (117 aa). A Phosphoserine modification is found at Ser-163. Coiled coils occupy residues 180–427 and 455–607; these read LSEE…AQLQ and AELR…VDKA. The residue at position 230 (Thr-230) is a Phosphothreonine. Positions 533–719 are required for localization to the centrosome and induction of aggresome formation; the sequence is DAISILLKRK…SLNLRPTDKH (187 aa). A sufficient for interaction with CNTRL region spans residues 584–719; it reads HNLQKKDADL…SLNLRPTDKH (136 aa). The interval 696–719 is disordered; that stretch reads LATNSRRGPLGRLASLNLRPTDKH. The residue at position 710 (Ser-710) is a Phosphoserine.

This sequence belongs to the hook family. Self-associates. Component of the FTS/Hook/FHIP complex (FHF complex), composed of AKTIP/FTS, FHIP1B, and one or more members of the Hook family of proteins HOOK1, HOOK2, and HOOK3. May interact directly with AKTIP/FTS, HOOK1 and HOOK3. Associates with several subunits of the homotypic vesicular sorting complex (the HOPS complex) including VPS16 and VPS41; these interactions may be indirect. Interacts with CNTRL. Interacts with microtubules. Interacts with ZC3H14. Interacts with LRGUK (via guanylate kinase-like domain). Interacts with CCDC181. Interacts with AP4M1; the interaction is direct, mediates the interaction between FTS-Hook-FHIP (FHF) complex and AP-4 and the perinuclear distribution of AP-4.

It is found in the cytoplasm. The protein localises to the cytoskeleton. It localises to the microtubule organizing center. Its subcellular location is the centrosome. The protein resides in the golgi apparatus. It is found in the trans-Golgi network. Functionally, component of the FTS/Hook/FHIP complex (FHF complex). The FHF complex may function to promote vesicle trafficking and/or fusion via the homotypic vesicular protein sorting complex (the HOPS complex). Contributes to the establishment and maintenance of centrosome function. May function in the positioning or formation of aggresomes, which are pericentriolar accumulations of misfolded proteins, proteasomes and chaperones. FHF complex promotes the distribution of AP-4 complex to the perinuclear area of the cell. The sequence is that of Protein Hook homolog 2 (HOOK2) from Homo sapiens (Human).